The following is a 294-amino-acid chain: Elongation factor Ts (294 aa).

Residues 80-83 are involved in Mg(2+) ion dislocation from EF-Tu; sequence TDFV.

The protein belongs to the EF-Ts family.

It is found in the cytoplasm. Functionally, associates with the EF-Tu.GDP complex and induces the exchange of GDP to GTP. It remains bound to the aminoacyl-tRNA.EF-Tu.GTP complex up to the GTP hydrolysis stage on the ribosome. This is Elongation factor Ts from Polynucleobacter asymbioticus (strain DSM 18221 / CIP 109841 / QLW-P1DMWA-1) (Polynucleobacter necessarius subsp. asymbioticus).